Reading from the N-terminus, the 152-residue chain is Membrane-spanning 4-domains subfamily A member 13 (152 aa).

The next 4 membrane-spanning stretches (helical) occupy residues Met-1–Ile-21, Thr-32–Ile-52, Thr-66–Ile-86, and Ile-111–Cys-131.

This sequence belongs to the MS4A family.

The protein localises to the membrane. May be involved in signal transduction as a component of a multimeric receptor complex. The protein is Membrane-spanning 4-domains subfamily A member 13 (MS4A13) of Homo sapiens (Human).